We begin with the raw amino-acid sequence, 479 residues long: Zinc metalloproteinase/disintegrin (479 aa).

The first 20 residues, 1–20, serve as a signal peptide directing secretion; that stretch reads MIQVLLVTICLAAFPYQGSS. Residues 21–187 constitute a propeptide that is removed on maturation; the sequence is IILESGKVND…PIKKASQLIV (167 aa). A Peptidase M12B domain is found at 193–390; sequence RYMEIVIVVD…ENPPCILNKP (198 aa). Positions 196 and 280 each coordinate Ca(2+). Cystine bridges form between Cys-304/Cys-385, Cys-344/Cys-369, and Cys-346/Cys-352. Residue His-329 participates in Zn(2+) binding. The active site involves Glu-330. Zn(2+)-binding residues include His-333 and His-339. Cys-385 and Asn-388 together coordinate Ca(2+). A propeptide spanning residues 390–414 is cleaved from the precursor; that stretch reads PLRTDTVSTPVSGNELLEAGKDYDR. The region spanning 398–479 is the Disintegrin domain; sequence TPVSGNELLE…ADCPRNPYHA (82 aa). 3 disulfides stabilise this stretch: Cys-435–Cys-441, Cys-440–Cys-465, and Cys-453–Cys-472. Positions 457 to 459 match the Cell attachment site motif; that stretch reads RGD.

It belongs to the venom metalloproteinase (M12B) family. P-II subfamily. P-IIa sub-subfamily. Monomer. Zn(2+) serves as cofactor. As to expression, expressed by the venom gland.

Its subcellular location is the secreted. Snake venom metalloproteinase that impairs hemostasis in the envenomed animal. Its function is as follows. Inhibits platelet aggregation induced by ADP, thrombin, platelet-activating factor and collagen. Acts by inhibiting fibrinogen interaction with platelet receptors GPIIb/GPIIIa (ITGA2B/ITGB3). The chain is Zinc metalloproteinase/disintegrin from Deinagkistrodon acutus (Hundred-pace snake).